A 212-amino-acid chain; its full sequence is Acyl-homoserine-lactone synthase (212 aa).

It belongs to the autoinducer synthase family.

The catalysed reaction is a fatty acyl-[ACP] + S-adenosyl-L-methionine = an N-acyl-L-homoserine lactone + S-methyl-5'-thioadenosine + holo-[ACP] + H(+). In terms of biological role, required for the synthesis of autoinducer molecules which bind to RaiR and that are involved in the restriction of nodule number. This Rhizobium etli protein is Acyl-homoserine-lactone synthase (raiI).